The chain runs to 273 residues: Light-independent protochlorophyllide reductase iron-sulfur ATP-binding protein (273 aa).

ATP-binding positions include 12–17 and K41; that span reads GIGKST. Residue S16 coordinates Mg(2+). Residues C97 and C131 each coordinate [4Fe-4S] cluster. 182-183 is a binding site for ATP; sequence NR.

The protein belongs to the NifH/BchL/ChlL family. In terms of assembly, homodimer. Protochlorophyllide reductase is composed of three subunits; BchL, BchN and BchB. The cofactor is [4Fe-4S] cluster.

The enzyme catalyses chlorophyllide a + oxidized 2[4Fe-4S]-[ferredoxin] + 2 ADP + 2 phosphate = protochlorophyllide a + reduced 2[4Fe-4S]-[ferredoxin] + 2 ATP + 2 H2O. Its pathway is porphyrin-containing compound metabolism; bacteriochlorophyll biosynthesis (light-independent). Its function is as follows. Component of the dark-operative protochlorophyllide reductase (DPOR) that uses Mg-ATP and reduced ferredoxin to reduce ring D of protochlorophyllide (Pchlide) to form chlorophyllide a (Chlide). This reaction is light-independent. The L component serves as a unique electron donor to the NB-component of the complex, and binds Mg-ATP. This is Light-independent protochlorophyllide reductase iron-sulfur ATP-binding protein from Chloroflexus aurantiacus (strain ATCC 29364 / DSM 637 / Y-400-fl).